We begin with the raw amino-acid sequence, 105 residues long: Phosphoribosyl-ATP pyrophosphatase (105 aa).

The protein belongs to the PRA-PH family.

The protein localises to the cytoplasm. The catalysed reaction is 1-(5-phospho-beta-D-ribosyl)-ATP + H2O = 1-(5-phospho-beta-D-ribosyl)-5'-AMP + diphosphate + H(+). It functions in the pathway amino-acid biosynthesis; L-histidine biosynthesis; L-histidine from 5-phospho-alpha-D-ribose 1-diphosphate: step 2/9. This is Phosphoribosyl-ATP pyrophosphatase from Roseobacter denitrificans (strain ATCC 33942 / OCh 114) (Erythrobacter sp. (strain OCh 114)).